The sequence spans 62 residues: UPF0337 protein XAC0100 (62 aa).

The protein belongs to the UPF0337 (CsbD) family.

The sequence is that of UPF0337 protein XAC0100 from Xanthomonas axonopodis pv. citri (strain 306).